We begin with the raw amino-acid sequence, 509 residues long: MMDSALYHPRIFFAHSFINGLYSSPRFANTCWRLVSRSSWEIKASENSDRNVFDENPVRKTDGSLFDSASFETVDAEITPETDDFFVSDAEGDPDCPTQGYSSIELALQALRKGKFVIVVDDETGDVEGNLIMAATLTSPKDIAFLIKNGSGIVSVGMKKENLERLSLTLMSPEMEDEDSSAPTFTITVDAKSGTSTGVSASDRAMTVLALSSLDAKPDDFRRPGHVFPLKYRDGGVLRRAGHTEASVDLMILAGLRPLSVLSAILDQEDGSMASLPYMKKLATEHDIPIVSLTDLIRYRRKRDKLVERITVSRLPTKWGLFQAYCYRSKLDGTENIALVKGNVGNGEDILVRVHSECLTGDIFGSARCDCGNQLDLAMELIEKEGRGVVVYLRGHEGRGIGLGHKLRAYNLQDEGHDTVQANVELGLSIDSREYGIGAQMLRDIGVRTMRLMTNNPAKFTGLKGYGLAVVGRVPVVTPITKENRRYMETKRKKMGHIYISDNNDQPLA.

Residues Met-1–Lys-43 constitute a chloroplast transit peptide. Positions Ala-44 to Lys-302 are inactive DHBP synthase. Residues Gly-125–Asp-126 and Arg-240–Thr-244 contribute to the D-ribulose 5-phosphate site. The GTP cyclohydrolase II stretch occupies residues Arg-303 to Ala-509. Arg-353–Glu-357 is a GTP binding site. Residues Cys-358, Cys-369, and Cys-371 each coordinate Zn(2+). GTP contacts are provided by residues Gln-374, Glu-397 to Arg-399, and Thr-419. Residue Asp-431 is the Proton acceptor; for GTP cyclohydrolase activity of the active site. The Nucleophile; for GTP cyclohydrolase activity role is filled by Arg-433. Positions 454 and 459 each coordinate GTP.

It in the N-terminal section; belongs to the DHBP synthase family. This sequence in the C-terminal section; belongs to the GTP cyclohydrolase II family. Zn(2+) is required as a cofactor. Expressed in leaves, shoots, roots, flowers and siliques.

It localises to the plastid. It is found in the chloroplast. It catalyses the reaction GTP + 4 H2O = 2,5-diamino-6-hydroxy-4-(5-phosphoribosylamino)-pyrimidine + formate + 2 phosphate + 3 H(+). It participates in cofactor biosynthesis; riboflavin biosynthesis; 5-amino-6-(D-ribitylamino)uracil from GTP: step 1/4. Involved in riboflavin biosynthesis. Catalyzes the conversion of GTP to 2,5-diamino-6-ribosylamino-4(3H)-pyrimidinone 5'-phosphate (DARP), formate and pyrophosphate. RIBA2 and RIBA3 together are not able to complement the loss of function of RIBA1. This Arabidopsis thaliana (Mouse-ear cress) protein is Monofunctional riboflavin biosynthesis protein RIBA 3, chloroplastic (RIBA3).